We begin with the raw amino-acid sequence, 146 residues long: D-aminoacyl-tRNA deacylase (146 aa).

A Gly-cisPro motif, important for rejection of L-amino acids motif is present at residues 137-138 (GP).

The protein belongs to the DTD family. In terms of assembly, homodimer.

It is found in the cytoplasm. The catalysed reaction is glycyl-tRNA(Ala) + H2O = tRNA(Ala) + glycine + H(+). It carries out the reaction a D-aminoacyl-tRNA + H2O = a tRNA + a D-alpha-amino acid + H(+). Its function is as follows. An aminoacyl-tRNA editing enzyme that deacylates mischarged D-aminoacyl-tRNAs. Also deacylates mischarged glycyl-tRNA(Ala), protecting cells against glycine mischarging by AlaRS. Acts via tRNA-based rather than protein-based catalysis; rejects L-amino acids rather than detecting D-amino acids in the active site. By recycling D-aminoacyl-tRNA to D-amino acids and free tRNA molecules, this enzyme counteracts the toxicity associated with the formation of D-aminoacyl-tRNA entities in vivo and helps enforce protein L-homochirality. The sequence is that of D-aminoacyl-tRNA deacylase from Psychrobacter sp. (strain PRwf-1).